Consider the following 701-residue polypeptide: MARKTPISLYRNIGISAHIDAGKTTTTERILFYTGLTHKLGEVHDGAATTDYMEQEQERGITITSAAVTSYWSGMAKQFPEHRFNIIDTPGHVDFTVEVERSMRVLDGAVMVYCAVGGVQPQSETVWRQANKYQVPRLAFVNKMDRQGANFFRVVEQMKTRLRANPVPIVIPVGAEDNFSGVVDLLKMKSIIWNEADKGTTFTYGDIPAELVETAEEWRQNMIEAAAEASEELMDKYLGGDELTEEEIVGALRQRTLAGEIQPMLCGSAFKNKGVQRMLDAVVELLPAPTDIPPVQGVNPNTEEADSRQASDEEKFSALAFKMLNDKYVGQLTFIRVYSGVVKSGDTVLNSVKGTRERIGRLVQMTAADRTEIEEVRAGDIAAAIGLKDVTTGETLCAESAPIILERMEFPEPVIHIAVEPKTKADQEKMGIALNRLAKEDPSFRVRTDEESGQTIISGMGELHLEIIVDRMKREFGVEANIGAPQVAYRETIRKAVKAEYKHAKQSGGKGQYGHVVIEMEPMEPGGEGYEFIDEIKGGVIPREFIPSVDKGIRDTLPNGIVAGYPVVDVRIRLVFGSYHDVDSSQLAFELAASQAFKEGMRQASPALLEPIMAVEVETPEEYMGDVMGDLNRRRGVVLGMDDDGIGGKKVRAEVPLAEMFGYSTDLRSATQGRATYSMEFKKYSEAPAHIAAAVTEARKG.

Residues 8–290 (SLYRNIGISA…AVVELLPAPT (283 aa)) form the tr-type G domain. GTP contacts are provided by residues 17–24 (AHIDAGKT), 88–92 (DTPGH), and 142–145 (NKMD).

It belongs to the TRAFAC class translation factor GTPase superfamily. Classic translation factor GTPase family. EF-G/EF-2 subfamily.

Its subcellular location is the cytoplasm. Its function is as follows. Catalyzes the GTP-dependent ribosomal translocation step during translation elongation. During this step, the ribosome changes from the pre-translocational (PRE) to the post-translocational (POST) state as the newly formed A-site-bound peptidyl-tRNA and P-site-bound deacylated tRNA move to the P and E sites, respectively. Catalyzes the coordinated movement of the two tRNA molecules, the mRNA and conformational changes in the ribosome. This is Elongation factor G from Neisseria meningitidis serogroup C (strain 053442).